The chain runs to 123 residues: Basic myotoxic phospholipase A2 PhTX-II (123 aa).

7 disulfides stabilise this stretch: Cys26–Cys116, Cys28–Cys45, Cys44–Cys95, Cys50–Cys123, Cys51–Cys88, Cys58–Cys81, and Cys75–Cys86. Ca(2+)-binding residues include Tyr27, Gly29, and Gly31. The active site involves His48. Asp49 lines the Ca(2+) pocket. Residue Asp89 is part of the active site.

As to quaternary structure, monomer. Requires Ca(2+) as cofactor. As to expression, expressed by the venom gland.

The protein resides in the secreted. The catalysed reaction is a 1,2-diacyl-sn-glycero-3-phosphocholine + H2O = a 1-acyl-sn-glycero-3-phosphocholine + a fatty acid + H(+). Its activity is regulated as follows. P-bromophenacyl bromide (BPB) completely inhibits the catalytic and edematogenic activities. Enzymatic activity is also diminished by EDTA, heparin and crotapotins F2 and F3 from C.d.collilineatus. Inhibited by divalent cations different from calcium ions (cadmium, magnesium, manganese, zinc), since they act as competitive antagonists of this cofactor. Functionally, snake venom phospholipase A2 (PLA2) that induces myotoxicity and local edema in mice. In addition, it causes neuromuscular blockade in avian neuromuscular preparations with a significant direct action on skeletal muscle function. Myotoxic action is exerted by both enzymatic and non-enzymatic mechanisms. PLA2 catalyzes the calcium-dependent hydrolysis of the 2-acyl groups in 3-sn-phosphoglycerides. The polypeptide is Basic myotoxic phospholipase A2 PhTX-II (Bothrocophias hyoprora (Amazonian hognose viper)).